We begin with the raw amino-acid sequence, 444 residues long: Methylenetetrahydrofolate--tRNA-(uracil-5-)-methyltransferase TrmFO (444 aa).

G10–G15 serves as a coordination point for FAD.

It belongs to the MnmG family. TrmFO subfamily. FAD serves as cofactor.

It localises to the cytoplasm. The enzyme catalyses uridine(54) in tRNA + (6R)-5,10-methylene-5,6,7,8-tetrahydrofolate + NADH + H(+) = 5-methyluridine(54) in tRNA + (6S)-5,6,7,8-tetrahydrofolate + NAD(+). It carries out the reaction uridine(54) in tRNA + (6R)-5,10-methylene-5,6,7,8-tetrahydrofolate + NADPH + H(+) = 5-methyluridine(54) in tRNA + (6S)-5,6,7,8-tetrahydrofolate + NADP(+). Catalyzes the folate-dependent formation of 5-methyl-uridine at position 54 (M-5-U54) in all tRNAs. This Streptococcus pneumoniae (strain Taiwan19F-14) protein is Methylenetetrahydrofolate--tRNA-(uracil-5-)-methyltransferase TrmFO.